A 164-amino-acid chain; its full sequence is MANPLRKTMVYLGLADEELDYQQGQQPAQQQQSPVQAVPTPVPAPQQQAKRAPVTPLHKPSTTTRNAAPAEMNEILTVHPKAYKDAQVIAENFREGVPVIINLSQMTDDDARRLIDFASGLSIGLYGKIERVTAKVFLLSPSHVAVSGEQSATEAEVEASFFGR.

The disordered stretch occupies residues Tyr-21–Glu-71. A compositionally biased stretch (low complexity) spans Gln-22 to Ala-49.

The protein belongs to the SepF family. In terms of assembly, homodimer. Interacts with FtsZ.

It localises to the cytoplasm. In terms of biological role, cell division protein that is part of the divisome complex and is recruited early to the Z-ring. Probably stimulates Z-ring formation, perhaps through the cross-linking of FtsZ protofilaments. Its function overlaps with FtsA. In Clavibacter sepedonicus (Clavibacter michiganensis subsp. sepedonicus), this protein is Cell division protein SepF.